A 76-amino-acid polypeptide reads, in one-letter code: Exodeoxyribonuclease 7 small subunit (76 aa).

Belongs to the XseB family. Heterooligomer composed of large and small subunits.

The protein localises to the cytoplasm. It carries out the reaction Exonucleolytic cleavage in either 5'- to 3'- or 3'- to 5'-direction to yield nucleoside 5'-phosphates.. Bidirectionally degrades single-stranded DNA into large acid-insoluble oligonucleotides, which are then degraded further into small acid-soluble oligonucleotides. The chain is Exodeoxyribonuclease 7 small subunit from Geotalea uraniireducens (strain Rf4) (Geobacter uraniireducens).